Reading from the N-terminus, the 329-residue chain is Carrier protein YMC2, mitochondrial (329 aa).

The segment at 1–27 (MSEEFPTPQLLDELEDQQKVTTPNEKR) is disordered. Residues 1–33 (MSEEFPTPQLLDELEDQQKVTTPNEKRELSSNR) constitute a mitochondrion transit peptide. 3 Solcar repeats span residues 34–115 (VLKD…MKRF), 143–226 (SQYY…LVAR), and 238–325 (PPWK…VMRF). 6 helical membrane-spanning segments follow: residues 38–58 (IFAG…FDTT), 84–104 (VFAF…CVSV), 140–160 (LPLS…SFLA), 205–225 (TMIR…ALVA), 243–263 (CLFG…LDVV), and 297–318 (FFKG…TFLT).

This sequence belongs to the mitochondrial carrier (TC 2.A.29) family.

Its subcellular location is the mitochondrion inner membrane. This chain is Carrier protein YMC2, mitochondrial (YMC2), found in Saccharomyces cerevisiae (strain ATCC 204508 / S288c) (Baker's yeast).